The sequence spans 237 residues: Ribonuclease PH (237 aa).

Residues Arg86 and 124 to 126 each bind phosphate; that span reads GTR.

Belongs to the RNase PH family. Homohexameric ring arranged as a trimer of dimers.

It catalyses the reaction tRNA(n+1) + phosphate = tRNA(n) + a ribonucleoside 5'-diphosphate. Functionally, phosphorolytic 3'-5' exoribonuclease that plays an important role in tRNA 3'-end maturation. Removes nucleotide residues following the 3'-CCA terminus of tRNAs; can also add nucleotides to the ends of RNA molecules by using nucleoside diphosphates as substrates, but this may not be physiologically important. Probably plays a role in initiation of 16S rRNA degradation (leading to ribosome degradation) during starvation. In Shewanella piezotolerans (strain WP3 / JCM 13877), this protein is Ribonuclease PH.